The sequence spans 360 residues: UDP-N-acetylglucosamine--N-acetylmuramyl-(pentapeptide) pyrophosphoryl-undecaprenol N-acetylglucosamine transferase (360 aa).

UDP-N-acetyl-alpha-D-glucosamine-binding positions include 13-15, Asn-125, Arg-164, Ser-191, and Gln-290; that span reads TGG.

The protein belongs to the glycosyltransferase 28 family. MurG subfamily.

It localises to the cell inner membrane. The catalysed reaction is di-trans,octa-cis-undecaprenyl diphospho-N-acetyl-alpha-D-muramoyl-L-alanyl-D-glutamyl-meso-2,6-diaminopimeloyl-D-alanyl-D-alanine + UDP-N-acetyl-alpha-D-glucosamine = di-trans,octa-cis-undecaprenyl diphospho-[N-acetyl-alpha-D-glucosaminyl-(1-&gt;4)]-N-acetyl-alpha-D-muramoyl-L-alanyl-D-glutamyl-meso-2,6-diaminopimeloyl-D-alanyl-D-alanine + UDP + H(+). It participates in cell wall biogenesis; peptidoglycan biosynthesis. In terms of biological role, cell wall formation. Catalyzes the transfer of a GlcNAc subunit on undecaprenyl-pyrophosphoryl-MurNAc-pentapeptide (lipid intermediate I) to form undecaprenyl-pyrophosphoryl-MurNAc-(pentapeptide)GlcNAc (lipid intermediate II). This Hahella chejuensis (strain KCTC 2396) protein is UDP-N-acetylglucosamine--N-acetylmuramyl-(pentapeptide) pyrophosphoryl-undecaprenol N-acetylglucosamine transferase.